A 413-amino-acid chain; its full sequence is Tyrosine--tRNA ligase 2 (413 aa).

The short motif at P58–H67 is the 'HIGH' region element. 2 repeat units span residues G89–K94 and G96–K101. A 2 X 6 AA tandem repeats region spans residues G89 to K101. Positions K242–S246 match the 'KMSKS' region motif. K245 contacts ATP. The region spanning I353 to Q413 is the S4 RNA-binding domain.

Belongs to the class-I aminoacyl-tRNA synthetase family. TyrS type 2 subfamily. As to quaternary structure, homodimer.

It is found in the cytoplasm. It carries out the reaction tRNA(Tyr) + L-tyrosine + ATP = L-tyrosyl-tRNA(Tyr) + AMP + diphosphate + H(+). Functionally, catalyzes the attachment of tyrosine to tRNA(Tyr) in a two-step reaction: tyrosine is first activated by ATP to form Tyr-AMP and then transferred to the acceptor end of tRNA(Tyr). The polypeptide is Tyrosine--tRNA ligase 2 (Bacillus subtilis (strain 168)).